The chain runs to 203 residues: Probable Tat proofreading chaperone DmsD (203 aa).

The protein belongs to the TorD/DmsD family. DmsD subfamily.

In terms of biological role, required for biogenesis/assembly of DMSO reductase, but not for the interaction of the DmsA signal peptide with the Tat system. May be part of a chaperone cascade complex that facilitates a folding-maturation pathway for the substrate protein. The chain is Probable Tat proofreading chaperone DmsD from Haemophilus influenzae (strain ATCC 51907 / DSM 11121 / KW20 / Rd).